Here is a 193-residue protein sequence, read N- to C-terminus: dTTP/UTP pyrophosphatase (193 aa).

Asp77 acts as the Proton acceptor in catalysis.

This sequence belongs to the Maf family. YhdE subfamily. The cofactor is a divalent metal cation.

It is found in the cytoplasm. The enzyme catalyses dTTP + H2O = dTMP + diphosphate + H(+). It carries out the reaction UTP + H2O = UMP + diphosphate + H(+). In terms of biological role, nucleoside triphosphate pyrophosphatase that hydrolyzes dTTP and UTP. May have a dual role in cell division arrest and in preventing the incorporation of modified nucleotides into cellular nucleic acids. The chain is dTTP/UTP pyrophosphatase from Phocaeicola vulgatus (strain ATCC 8482 / DSM 1447 / JCM 5826 / CCUG 4940 / NBRC 14291 / NCTC 11154) (Bacteroides vulgatus).